We begin with the raw amino-acid sequence, 339 residues long: Homeobox protein DBX2 (339 aa).

Residues 186–245 (GILRRAVFSEDQRKALEKMFQKQKYISKTDRKKLAINLGLKESQVKIWFQNRRMKWRNSK) constitute a DNA-binding region (homeobox). Residues 282–318 (VPQQHSSPRWRENSPEPSERLIQESSGAPPPEANSLQ) form a disordered region. Positions 290–303 (RWRENSPEPSERLI) are enriched in basic and acidic residues.

This sequence belongs to the H2.0 homeobox family.

It is found in the nucleus. This is Homeobox protein DBX2 (DBX2) from Homo sapiens (Human).